Here is a 258-residue protein sequence, read N- to C-terminus: tRNA pseudouridine synthase A (258 aa).

Residue Asp55 is the Nucleophile of the active site. Tyr113 contacts substrate.

This sequence belongs to the tRNA pseudouridine synthase TruA family. As to quaternary structure, homodimer.

It catalyses the reaction uridine(38/39/40) in tRNA = pseudouridine(38/39/40) in tRNA. Formation of pseudouridine at positions 38, 39 and 40 in the anticodon stem and loop of transfer RNAs. The sequence is that of tRNA pseudouridine synthase A from Limosilactobacillus fermentum (strain NBRC 3956 / LMG 18251) (Lactobacillus fermentum).